The chain runs to 908 residues: NADH-quinone oxidoreductase subunit G (908 aa).

Residues 2–83 (ATIHVDGKEY…GTFISIDDEE (82 aa)) form the 2Fe-2S ferredoxin-type domain. The [2Fe-2S] cluster site is built by Cys-34, Cys-45, Cys-48, and Cys-67. In terms of domain architecture, 4Fe-4S His(Cys)3-ligated-type spans 83 to 122 (EAKQFRESVVEWLMTNHPHDCPVCEEGGNCHLQDMTVMTG). [4Fe-4S] cluster is bound by residues His-99, Cys-103, Cys-106, Cys-112, Cys-151, Cys-154, Cys-157, Cys-201, Cys-228, Cys-231, Cys-235, and Cys-263. The 4Fe-4S Mo/W bis-MGD-type domain maps to 221 to 277 (MQFAPSICQQCSIGCNISPGERYGELRRIENRYNGTVNHYFLCDRGRFGYGYVNLKD).

It belongs to the complex I 75 kDa subunit family. In terms of assembly, composed of 13 different subunits. Subunits NuoCD, E, F, and G constitute the peripheral sector of the complex. Requires [2Fe-2S] cluster as cofactor. It depends on [4Fe-4S] cluster as a cofactor.

It catalyses the reaction a quinone + NADH + 5 H(+)(in) = a quinol + NAD(+) + 4 H(+)(out). In terms of biological role, NDH-1 shuttles electrons from NADH, via FMN and iron-sulfur (Fe-S) centers, to quinones in the respiratory chain. The immediate electron acceptor for the enzyme in this species is believed to be ubiquinone. Couples the redox reaction to proton translocation (for every two electrons transferred, four hydrogen ions are translocated across the cytoplasmic membrane), and thus conserves the redox energy in a proton gradient. The sequence is that of NADH-quinone oxidoreductase subunit G (nuoG) from Shigella flexneri.